The following is a 263-amino-acid chain: Endonuclease 8 (263 aa).

The Schiff-base intermediate with DNA role is filled by Pro-2. Glu-3 (proton donor) is an active-site residue. Lys-53 (proton donor; for beta-elimination activity) is an active-site residue. DNA contacts are provided by Gln-70, Arg-125, and Asn-169. An FPG-type zinc finger spans residues 229-263; the sequence is KVFHRDGEACERCGGIIEKTTLSSRPFYWCPHCQK. Arg-253 functions as the Proton donor; for delta-elimination activity in the catalytic mechanism.

This sequence belongs to the FPG family. Zn(2+) is required as a cofactor.

The enzyme catalyses 2'-deoxyribonucleotide-(2'-deoxyribose 5'-phosphate)-2'-deoxyribonucleotide-DNA = a 3'-end 2'-deoxyribonucleotide-(2,3-dehydro-2,3-deoxyribose 5'-phosphate)-DNA + a 5'-end 5'-phospho-2'-deoxyribonucleoside-DNA + H(+). Its function is as follows. Involved in base excision repair of DNA damaged by oxidation or by mutagenic agents. Acts as a DNA glycosylase that recognizes and removes damaged bases. Has a preference for oxidized pyrimidines, such as thymine glycol, 5,6-dihydrouracil and 5,6-dihydrothymine. Has AP (apurinic/apyrimidinic) lyase activity and introduces nicks in the DNA strand. Cleaves the DNA backbone by beta-delta elimination to generate a single-strand break at the site of the removed base with both 3'- and 5'-phosphates. This chain is Endonuclease 8, found in Salmonella heidelberg (strain SL476).